A 25-amino-acid chain; its full sequence is Pregnancy-associated glycoprotein 72 (25 aa).

N-linked (GlcNAc...) asparagine glycans are attached at residues N4 and N21.

It belongs to the peptidase A1 family. Post-translationally, N-glycosylated. In terms of tissue distribution, expressed in chorionic epithelium (trophectoderm).

It localises to the secreted. The protein resides in the extracellular space. The polypeptide is Pregnancy-associated glycoprotein 72 (Bison bison (American bison)).